The chain runs to 271 residues: 4-diphosphocytidyl-2-C-methyl-D-erythritol kinase (271 aa).

Residue lysine 17 is part of the active site. ATP is bound at residue 97–107 (PVGSGLGGGSS). Aspartate 137 is an active-site residue.

The protein belongs to the GHMP kinase family. IspE subfamily.

It catalyses the reaction 4-CDP-2-C-methyl-D-erythritol + ATP = 4-CDP-2-C-methyl-D-erythritol 2-phosphate + ADP + H(+). The protein operates within isoprenoid biosynthesis; isopentenyl diphosphate biosynthesis via DXP pathway; isopentenyl diphosphate from 1-deoxy-D-xylulose 5-phosphate: step 3/6. Catalyzes the phosphorylation of the position 2 hydroxy group of 4-diphosphocytidyl-2C-methyl-D-erythritol. The polypeptide is 4-diphosphocytidyl-2-C-methyl-D-erythritol kinase (Thermotoga maritima (strain ATCC 43589 / DSM 3109 / JCM 10099 / NBRC 100826 / MSB8)).